Here is an 820-residue protein sequence, read N- to C-terminus: G-type lectin S-receptor-like serine/threonine-protein kinase At1g11300 (820 aa).

An N-terminal signal peptide occupies residues 1–26; it reads MRLHESSSPFVCILVLSCFFLSVSLA. The region spanning 27 to 150 is the Bulb-type lectin domain; it reads QERAFFSGKL…SSDAYLWESF (124 aa). Over 27–436 the chain is Extracellular; sequence QERAFFSGKL…SEIKTKDKRP (410 aa). Residues asparagine 37, asparagine 58, asparagine 87, asparagine 115, asparagine 123, asparagine 173, asparagine 211, asparagine 247, asparagine 256, and asparagine 282 are each glycosylated (N-linked (GlcNAc...) asparagine). Residues 290 to 326 form the EGF-like; atypical domain; the sequence is PATECDNYRRCGEFATCNPRKNPLCSCIRGFRPRNLI. 2 disulfides stabilise this stretch: cysteine 294-cysteine 306 and cysteine 300-cysteine 314. Asparagine 332 and asparagine 351 each carry an N-linked (GlcNAc...) asparagine glycan. The PAN domain maps to 345 to 425; that stretch reads CERQNNNGSA…SGLDLYIRLA (81 aa). 2 cysteine pairs are disulfide-bonded: cysteine 379–cysteine 400 and cysteine 383–cysteine 389. Asparagine 404 is a glycosylation site (N-linked (GlcNAc...) asparagine). Residues 437–457 traverse the membrane as a helical segment; it reads ILIGTILAGGIFVVAACVLLA. Over 458-820 the chain is Cytoplasmic; the sequence is RRIVMKKRAK…NVTITDVTGR (363 aa). Residues 509–788 form the Protein kinase domain; it reads FSLRNKLGQG…DIPEPKQPAF (280 aa). ATP is bound by residues 515 to 523 and lysine 537; that span reads LGQGGFGPV. The interval 598-615 is caM-binding; the sequence is RRAKLLDWKTRFNIINGI. Aspartate 634 serves as the catalytic Proton acceptor.

Belongs to the protein kinase superfamily. Ser/Thr protein kinase family.

It localises to the cell membrane. The catalysed reaction is L-seryl-[protein] + ATP = O-phospho-L-seryl-[protein] + ADP + H(+). It carries out the reaction L-threonyl-[protein] + ATP = O-phospho-L-threonyl-[protein] + ADP + H(+). This is G-type lectin S-receptor-like serine/threonine-protein kinase At1g11300 from Arabidopsis thaliana (Mouse-ear cress).